Reading from the N-terminus, the 430-residue chain is Adenylosuccinate synthetase (430 aa).

GTP contacts are provided by residues G12–K18 and G40–T42. D13 serves as the catalytic Proton acceptor. Mg(2+) contacts are provided by D13 and G40. Residues D13–K16, N38–H41, T130, R144, Q225, T240, and R304 each bind IMP. Catalysis depends on H41, which acts as the Proton donor. Position 300 to 306 (A300 to R306) interacts with substrate. GTP contacts are provided by residues R306, K332–D334, and S414–G416.

Belongs to the adenylosuccinate synthetase family. In terms of assembly, homodimer. Mg(2+) serves as cofactor.

Its subcellular location is the cytoplasm. The catalysed reaction is IMP + L-aspartate + GTP = N(6)-(1,2-dicarboxyethyl)-AMP + GDP + phosphate + 2 H(+). It functions in the pathway purine metabolism; AMP biosynthesis via de novo pathway; AMP from IMP: step 1/2. Functionally, plays an important role in the de novo pathway of purine nucleotide biosynthesis. Catalyzes the first committed step in the biosynthesis of AMP from IMP. This is Adenylosuccinate synthetase from Geobacter metallireducens (strain ATCC 53774 / DSM 7210 / GS-15).